The chain runs to 667 residues: Flavin-dependent halogenase malA (667 aa).

Residues His48, Glu70, Ile79, and Ser82 each coordinate FAD. Lys108 is a catalytic residue. FAD is bound by residues Arg144, Val168, Asp399, and Ile412. Substrate is bound at residue Glu494. The Zn(2+) site is built by Cys597, Cys600, Cys613, and Cys616. The interval 621-646 (TEPQTAVTFDPPLTAEEEALLYAAWN) is flexible region.

It belongs to the flavin-dependent halogenase family. Zn(2+) serves as cofactor.

It catalyses the reaction (+)-premalbrancheamide + 2 FAD + 2 chloride + 4 H(+) = (+)-malbrancheamide + 2 FADH2. The enzyme catalyses (+)-premalbrancheamide + FAD + chloride + 2 H(+) = (+)-malbrancheamide B + FADH2. The catalysed reaction is (+)-premalbrancheamide + FAD + chloride + 2 H(+) = (+)-isomalbrancheamide B + FADH2. It carries out the reaction (+)-malbrancheamide B + FAD + chloride + 2 H(+) = (+)-malbrancheamide + FADH2. It catalyses the reaction (+)-isomalbrancheamide B + FAD + chloride + 2 H(+) = (+)-malbrancheamide + FADH2. The enzyme catalyses (+)-premalbrancheamide + bromide + FAD + 2 H(+) = (+)-malbrancheamide C + FADH2. The catalysed reaction is (+)-premalbrancheamide + bromide + FAD + 2 H(+) = (+)-isomalbrancheamide C + FADH2. It carries out the reaction (+)-malbrancheamide B + bromide + FAD + 2 H(+) = (+)-malbrancheamide D + FADH2. It catalyses the reaction (+)-isomalbrancheamide B + bromide + FAD + 2 H(+) = (+)-isomalbrancheamide D + FADH2. It participates in alkaloid biosynthesis. Functionally, flavin-dependent halogenase; part of the gene cluster that mediates the biosynthesis of malbrancheamide, a dichlorinated fungal indole alkaloid that belongs to a family of natural products containing a characteristic bicyclo[2.2.2]diazaoctane core. The first step of malbrancheamide biosynthesis involves coupling of L-proline and L-tryptophan by malG, a bimodular NRPS, to produce L-Pro-L-Trp aldehyde through reductive offloading. This compound undergoes spontaneous cyclization and dehydration to give a dienamine which is reverse prenylated at C-2 by malE. The other prenyltransferase present in the cluster, malB, displays modest activity, suggesting that may be a redundant gene in the pathway. Subsequently, a [4+2] Diels-Alder cyclo-addition catalyzed by the bifunctional enzyme malC forms the characteristic bicyclo[2.2.2]diazaoctane ring of premalbrancheamid. Finally, the flavin-dependent halogenase malA catalyzes the iterative dichlorination of the indole ring of premalbrancheamide to yield C-9 monochlorinated malbrancheamide B, C-8 monochlorinated isomalbrancheamide B, and dichlorinated malbrancheamide. MalA is also able to brominate premalbrancheamide at C-9 to yield malbrancheamide C, and, to a lesser extend, at C-8 to yield isomalbrancheamide C. Finally, malA can brominate C-9 monochlorinated malbrancheamide B at C-8 to yield malbrancheamide D, or C-8 monochlorinated isomalbrancheamide B at C-9 to produce isomalbrancheamide D. The protein is Flavin-dependent halogenase malA of Malbranchea aurantiaca.